The chain runs to 360 residues: UDP-N-acetylglucosamine--N-acetylmuramyl-(pentapeptide) pyrophosphoryl-undecaprenol N-acetylglucosamine transferase (360 aa).

UDP-N-acetyl-alpha-D-glucosamine contacts are provided by residues 15–17 (TGG), Asn124, Arg165, Ser191, and Gln285.

The protein belongs to the glycosyltransferase 28 family. MurG subfamily.

The protein localises to the cell inner membrane. It carries out the reaction di-trans,octa-cis-undecaprenyl diphospho-N-acetyl-alpha-D-muramoyl-L-alanyl-D-glutamyl-meso-2,6-diaminopimeloyl-D-alanyl-D-alanine + UDP-N-acetyl-alpha-D-glucosamine = di-trans,octa-cis-undecaprenyl diphospho-[N-acetyl-alpha-D-glucosaminyl-(1-&gt;4)]-N-acetyl-alpha-D-muramoyl-L-alanyl-D-glutamyl-meso-2,6-diaminopimeloyl-D-alanyl-D-alanine + UDP + H(+). It participates in cell wall biogenesis; peptidoglycan biosynthesis. Functionally, cell wall formation. Catalyzes the transfer of a GlcNAc subunit on undecaprenyl-pyrophosphoryl-MurNAc-pentapeptide (lipid intermediate I) to form undecaprenyl-pyrophosphoryl-MurNAc-(pentapeptide)GlcNAc (lipid intermediate II). In Gloeothece citriformis (strain PCC 7424) (Cyanothece sp. (strain PCC 7424)), this protein is UDP-N-acetylglucosamine--N-acetylmuramyl-(pentapeptide) pyrophosphoryl-undecaprenol N-acetylglucosamine transferase.